A 199-amino-acid polypeptide reads, in one-letter code: Oleosin 21.2 kDa (199 aa).

Positions 1–14 (MADTHRVDRTDRHF) are enriched in basic and acidic residues. A disordered region spans residues 1-31 (MADTHRVDRTDRHFQFQSPYEGGRGQGQYEG). An N-acetylalanine modification is found at A2. The tract at residues 2–56 (ADTHRVDRTDRHFQFQSPYEGGRGQGQYEGDRGYGGGGYKSMMPESGPSSTQVLS) is polar. Residues 22 to 31 (GGRGQGQYEG) are compositionally biased toward gly residues. 3 helical membrane-spanning segments follow: residues 51–71 (STQV…LALA), 72–92 (GLLL…FLLF), and 96–116 (IVPA…SGMF). Residues 57-128 (LLIGVPVVGS…TGLSSISWVM (72 aa)) form a hydrophobic region. The disordered stretch occupies residues 159–199 (KGKEMGQHVQNKAQDVKQYDISKPHDTTTKGHETQGRTTAA). Over residues 172–193 (QDVKQYDISKPHDTTTKGHETQ) the composition is skewed to basic and acidic residues.

Belongs to the oleosin family.

The protein localises to the lipid droplet. It localises to the membrane. Functionally, may have a structural role to stabilize the lipid body during desiccation of the seed by preventing coalescence of the oil. Probably interacts with both lipid and phospholipid moieties of lipid bodies. May also provide recognition signals for specific lipase anchorage in lipolysis during seedling growth. The sequence is that of Oleosin 21.2 kDa from Arabidopsis thaliana (Mouse-ear cress).